We begin with the raw amino-acid sequence, 266 residues long: 3-methyl-2-oxobutanoate hydroxymethyltransferase (266 aa).

Residues Asp45 and Asp84 each contribute to the Mg(2+) site. 3-methyl-2-oxobutanoate is bound by residues 45–46 (DS), Asp84, and Lys112. Mg(2+) is bound at residue Glu114. The active-site Proton acceptor is the Glu181.

The protein belongs to the PanB family. Homodecamer; pentamer of dimers. Mg(2+) is required as a cofactor.

It is found in the cytoplasm. The enzyme catalyses 3-methyl-2-oxobutanoate + (6R)-5,10-methylene-5,6,7,8-tetrahydrofolate + H2O = 2-dehydropantoate + (6S)-5,6,7,8-tetrahydrofolate. It functions in the pathway cofactor biosynthesis; (R)-pantothenate biosynthesis; (R)-pantoate from 3-methyl-2-oxobutanoate: step 1/2. Its function is as follows. Catalyzes the reversible reaction in which hydroxymethyl group from 5,10-methylenetetrahydrofolate is transferred onto alpha-ketoisovalerate to form ketopantoate. The protein is 3-methyl-2-oxobutanoate hydroxymethyltransferase of Pseudomonas savastanoi pv. phaseolicola (strain 1448A / Race 6) (Pseudomonas syringae pv. phaseolicola (strain 1448A / Race 6)).